The chain runs to 395 residues: Acid ceramidase (395 aa).

A signal peptide spans 1–21 (MLGRSRLTFVLLSVTVTCSVA). Cysteines 31 and 340 form a disulfide. C143 serves as the catalytic Nucleophile. Residues N173, N259, N342, and N348 are each glycosylated (N-linked (GlcNAc...) asparagine). A disulfide bridge links C388 with C392.

It belongs to the acid ceramidase family. In terms of assembly, heterodimer; disulfide-linked. The heterodimer is composed of the disulfide-linked alpha and beta chains produced by autocatalytic cleavage of the precursor. N-glycosylated. Post-translationally, proteolytically cleaved into two chains alpha and beta that remain associated via a disulfide bond. Cleavage gives rise to a conformation change that activates the enzyme. The same catalytic Cys residue mediates the autoproteolytic cleavage and subsequent hydrolysis of lipid substrates. The beta chain may undergo an additional C-terminal processing.

It localises to the lysosome. The protein resides in the secreted. The catalysed reaction is an N-acylsphing-4-enine + H2O = sphing-4-enine + a fatty acid. It carries out the reaction N-dodecanoylsphing-4-enine + H2O = dodecanoate + sphing-4-enine. The enzyme catalyses N-tetradecanoylsphing-4-enine + H2O = tetradecanoate + sphing-4-enine. It catalyses the reaction N-hexadecanoylsphing-4-enine + H2O = sphing-4-enine + hexadecanoate. The catalysed reaction is N-octadecanoylsphing-4-enine + H2O = sphing-4-enine + octadecanoate. It carries out the reaction N-dodecanoyl-(4R)-hydroxysphinganine + H2O = (4R)-hydroxysphinganine + dodecanoate. The enzyme catalyses N-(dodecanoyl)-sphinganine + H2O = dodecanoate + sphinganine. It catalyses the reaction N-(acetyl)-sphing-4-enine + H2O = sphing-4-enine + acetate. The catalysed reaction is N-(hexanoyl)sphing-4-enine + H2O = hexanoate + sphing-4-enine. It carries out the reaction N-octanoylsphing-4-enine + H2O = octanoate + sphing-4-enine. The enzyme catalyses N-(9Z-octadecenoyl)-sphing-4-enine + H2O = sphing-4-enine + (9Z)-octadecenoate. It catalyses the reaction N-dodecanoylethanolamine + H2O = dodecanoate + ethanolamine. It functions in the pathway lipid metabolism; sphingolipid metabolism. In terms of biological role, lysosomal ceramidase that hydrolyzes sphingolipid ceramides into sphingosine and free fatty acids at acidic pH. Ceramides, sphingosine, and its phosphorylated form sphingosine-1-phosphate are bioactive lipids that mediate cellular signaling pathways regulating several biological processes including cell proliferation, apoptosis and differentiation. Has a higher catalytic efficiency towards C12-ceramides versus other ceramides. Also catalyzes the reverse reaction allowing the synthesis of ceramides from fatty acids and sphingosine. For the reverse synthetic reaction, the natural sphingosine D-erythro isomer is more efficiently utilized as a substrate compared to D-erythro-dihydrosphingosine and D-erythro-phytosphingosine, while the fatty acids with chain lengths of 12 or 14 carbons are the most efficiently used. Also has an N-acylethanolamine hydrolase activity. By regulating the levels of ceramides, sphingosine and sphingosine-1-phosphate in the epidermis, mediates the calcium-induced differentiation of epidermal keratinocytes. Also indirectly regulates tumor necrosis factor/TNF-induced apoptosis. By regulating the intracellular balance between ceramides and sphingosine, in adrenocortical cells, probably also acts as a regulator of steroidogenesis. The sequence is that of Acid ceramidase from Balaenoptera acutorostrata scammoni (North Pacific minke whale).